The sequence spans 149 residues: Cell division protein SepF (149 aa).

This sequence belongs to the SepF family. In terms of assembly, homodimer. Interacts with FtsZ.

It is found in the cytoplasm. Its function is as follows. Cell division protein that is part of the divisome complex and is recruited early to the Z-ring. Probably stimulates Z-ring formation, perhaps through the cross-linking of FtsZ protofilaments. Its function overlaps with FtsA. The sequence is that of Cell division protein SepF from Pelotomaculum thermopropionicum (strain DSM 13744 / JCM 10971 / SI).